The primary structure comprises 472 residues: Mothers against decapentaplegic homolog 1 (472 aa).

The 125-residue stretch at 12–136 folds into the MH1 domain; that stretch reads PAVKRLLGWK…YKRVDSPVLP (125 aa). Zn(2+)-binding residues include cysteine 64, cysteine 109, cysteine 121, and histidine 126. The disordered stretch occupies residues 158-238; that stretch reads NPLHQTEPPM…PPPAYMPPEE (81 aa). Residues 169–182 show a composition bias toward polar residues; it reads QNATFPDSFPQQPA. Residues 188–226 are compositionally biased toward low complexity; the sequence is TPNSPTNSYPSSPNSGTGSTATFPHSPSSSDPGSPFQMP. The span at 227-238 shows a compositional bias: pro residues; sequence ETPPPAYMPPEE. One can recognise an MH2 domain in the interval 278–472; sequence WCSIVYYELN…SPHNPISSVS (195 aa).

It belongs to the dwarfin/SMAD family. As to quaternary structure, may form trimers with another Smad1 and the co-Smad Smad4.

It localises to the cytoplasm. Its subcellular location is the nucleus. Functionally, involved in ventralization. May mediate Bmp2b signaling during embryonic dorsal-ventral pattern formation, and may itself be a transcriptional target for Smad5-mediated Bmp2b signaling. In Danio rerio (Zebrafish), this protein is Mothers against decapentaplegic homolog 1 (smad1).